The primary structure comprises 152 residues: Orientotoxin-1 (152 aa).

As to expression, expressed by the venom gland.

The protein localises to the secreted. It catalyses the reaction a 1-acyl-sn-glycero-3-phosphocholine + H2O = sn-glycerol 3-phosphocholine + a fatty acid + H(+). Its function is as follows. Neurotoxin of presynaptic effect which degrades lysophospholipids. This Vespa orientalis (Oriental hornet) protein is Orientotoxin-1.